The chain runs to 239 residues: Probable transcriptional regulator ycf27 (239 aa).

Residues 7–120 (KILVVDDEIS…ELEARIRSLL (114 aa)) enclose the Response regulatory domain. The residue at position 56 (Asp-56) is a 4-aspartylphosphate. Residues 76 to 94 (DIPIIMLTALGDVADRITG) constitute a DNA-binding region (H-T-H motif). Residues 135 to 236 (GENLQIGFLK…ARGIGYLFQN (102 aa)) constitute a DNA-binding region (ompR/PhoB-type).

The protein resides in the plastid. Its subcellular location is the cyanelle. In terms of biological role, probable promoter-specific protein mediating the interaction between DNA and RNA polymerase. The chain is Probable transcriptional regulator ycf27 (ycf27) from Cyanophora paradoxa.